The following is a 309-amino-acid chain: Foldase protein PrsA 2 (309 aa).

An N-terminal signal peptide occupies residues Met-1–Ala-22. The N-palmitoyl cysteine moiety is linked to residue Cys-23. The S-diacylglycerol cysteine moiety is linked to residue Cys-23. The PpiC domain occupies Thr-146 to Lys-241.

Belongs to the PrsA family.

The protein localises to the cell membrane. It catalyses the reaction [protein]-peptidylproline (omega=180) = [protein]-peptidylproline (omega=0). Its function is as follows. Plays a major role in protein secretion by helping the post-translocational extracellular folding of several secreted proteins. This Streptococcus pyogenes serotype M6 (strain ATCC BAA-946 / MGAS10394) protein is Foldase protein PrsA 2.